Here is a 122-residue protein sequence, read N- to C-terminus: Cytochrome c3 hydrogenase large chain (122 aa).

Fe cation is required as a cofactor.

The enzyme catalyses 2 Fe(III)-[cytochrome c3] + H2 = 2 Fe(II)-[cytochrome c3] + 2 H(+). In Acidithiobacillus ferrooxidans (Thiobacillus ferrooxidans), this protein is Cytochrome c3 hydrogenase large chain (hoxG).